The chain runs to 347 residues: Dolichyl-diphosphooligosaccharide--protein glycosyltransferase subunit TUSC3 (347 aa).

A signal peptide spans 1–41 (MGARGAPSRRRQAGRRPRYLPTGSFPFLLLLLLLCIQLGGG). Over 42 to 196 (QKKKENLLAE…DVHIRVFRPP (155 aa)) the chain is Lumenal. The Thioredoxin domain maps to 59 to 187 (WSSRRSVFRM…LAKWIADRTD (129 aa)). Asparagine 83 carries an N-linked (GlcNAc...) asparagine glycan. Cysteine 99 and cysteine 102 form a disulfide bridge. The helical transmembrane segment at 197–217 (NYSGTIALALLVSLVGGLLYL) threads the bilayer. At 218-221 (RRNN) the chain is on the cytoplasmic side. A helical transmembrane segment spans residues 222–242 (LEFIYNKTGWAMVSLCIVFAM). The Lumenal segment spans residues 243–276 (TSGQMWNHIRGPPYAHKNPHNGQVSYIHGSSQVQ). The helical transmembrane segment at 277–297 (FVAESHIILVLNAAITMGMDL) threads the bilayer. Topologically, residues 298 to 312 (LNEAATSKGDVGKRR) are cytoplasmic. The chain crosses the membrane as a helical span at residues 313–333 (IICLVGLGLVVFFFSFLLSIF). Topologically, residues 334–347 (RSKYHGYPYSFLIK) are lumenal.

The protein belongs to the OST3/OST6 family. In terms of assembly, accessory component of the STT3B-containing form of the oligosaccharyltransferase (OST) complex. OST exists in two different complex forms which contain common core subunits RPN1, RPN2, OST48, OST4, DAD1 and TMEM258, either STT3A or STT3B as catalytic subunits, and form-specific accessory subunits. OST can form stable complexes with the Sec61 complex or with both the Sec61 and TRAP complexes. The association of TUSC3 or MAGT1 with the STT3B-containing complex seems to be mutually exclusvice.

Its subcellular location is the endoplasmic reticulum membrane. Its pathway is protein modification; protein glycosylation. In terms of biological role, acts as accessory component of the N-oligosaccharyl transferase (OST) complex which catalyzes the transfer of a high mannose oligosaccharide from a lipid-linked oligosaccharide donor to an asparagine residue within an Asn-X-Ser/Thr consensus motif in nascent polypeptide chains. Involved in N-glycosylation of STT3B-dependent substrates. Specifically required for the glycosylation of a subset of acceptor sites that are near cysteine residues; in this function seems to act redundantly with MAGT1. In its oxidized form proposed to form transient mixed disulfides with a glycoprotein substrate to facilitate access of STT3B to the unmodified acceptor site. Also has oxidoreductase-independent functions in the STT3B-containing OST complex possibly involving substrate recognition. Could indirectly play a role in Mg(2+) transport. This Bos taurus (Bovine) protein is Dolichyl-diphosphooligosaccharide--protein glycosyltransferase subunit TUSC3 (TUSC3).